The sequence spans 1508 residues: Ras guanine nucleotide exchange factor Y (1508 aa).

Disordered stretches follow at residues 1-73 (MIII…NNNE), 128-182 (KVLS…PKSV), 197-272 (IDNN…YSTS), 396-517 (ILQC…EDED), 565-593 (LSEN…SIPT), 606-727 (LPNI…AEPS), 831-1021 (NVII…SNKE), and 1153-1172 (TNED…TNKN). Low complexity-rich tracts occupy residues 9 to 22 (NINN…NNNS) and 33 to 72 (NNNN…NNNN). 2 stretches are compositionally biased toward polar residues: residues 128-150 (KVLS…TNTI) and 172-182 (DRTSQDIPKSV). The segment covering 199–216 (NNTTNNNSNNNNNSSLST) has biased composition (low complexity). The span at 223 to 232 (DSLETNPIKD) shows a compositional bias: basic and acidic residues. A compositionally biased stretch (acidic residues) spans 233–250 (EESEESEESEESKEEEEE). Low complexity predominate over residues 255–272 (IKTTKTTSETIESSYSTS). The segment covering 399–409 (CKDDSSSKDQD) has biased composition (basic and acidic residues). Low complexity predominate over residues 413–447 (NNSAGSSGNSSASNSNRNSIAFSSSNHFSSESSQS). Residues 465 to 475 (PQSPSPSPSPP) are compositionally biased toward pro residues. Residues 492 to 510 (FNQQTNFSVSPTKSPSNEK) show a composition bias toward polar residues. Low complexity-rich tracts occupy residues 574–593 (NQPS…SIPT), 606–660 (LPNI…LTES), 668–687 (NNNN…NNNN), 831–855 (NVII…NTVK), 862–891 (NKSS…SLTP), 942–984 (SLWS…SPPT), 993–1019 (ITTG…NNSN), and 1160–1172 (SNSN…TNKN). Residues 659 to 686 (ESLKTRIEENNNNNNNKNINNNNNNNNN) adopt a coiled-coil conformation. The 161-residue stretch at 1074 to 1234 (NRIKVRSASL…IILKIIDRKA (161 aa)) folds into the N-terminal Ras-GEF domain. A Ras-GEF domain is found at 1278-1508 (DDLEIARQLT…LYKQSKIIEP (231 aa)).

Promotes the exchange of Ras-bound GDP by GTP. The polypeptide is Ras guanine nucleotide exchange factor Y (gefY) (Dictyostelium discoideum (Social amoeba)).